Reading from the N-terminus, the 177-residue chain is CRIB domain-containing protein RIC8 (177 aa).

The region spanning 17-30 (IGTPTDVKHVAHIG) is the CRIB domain. Residues 72 to 89 (STRSRDIPRLPKSSRERS) show a composition bias toward basic and acidic residues. A disordered region spans residues 72-177 (STRSRDIPRL…SSTSDAGYLT (106 aa)). Residues 158-171 (GSQVESISDSSSTS) are compositionally biased toward low complexity.

In terms of biological role, functions as a downstream effector of Rho-related GTP binding proteins of the 'Rho of Plants' (ROPs) family. Participates in the propagation of ROP GTPase signals in specific cellular responses. This is CRIB domain-containing protein RIC8 (RIC8) from Arabidopsis thaliana (Mouse-ear cress).